The sequence spans 642 residues: Threonine--tRNA ligase (642 aa).

A TGS domain is found at 1–61 (MIKVTFPDGN…EHDGKLQLLT (61 aa)). Residues 240 to 539 (DHRKIGKDLD…LIEEYKGSFP (300 aa)) are catalytic. Residues Cys334, His385, and His516 each contribute to the Zn(2+) site.

The protein belongs to the class-II aminoacyl-tRNA synthetase family. As to quaternary structure, homodimer. Zn(2+) is required as a cofactor.

Its subcellular location is the cytoplasm. It catalyses the reaction tRNA(Thr) + L-threonine + ATP = L-threonyl-tRNA(Thr) + AMP + diphosphate + H(+). Catalyzes the attachment of threonine to tRNA(Thr) in a two-step reaction: L-threonine is first activated by ATP to form Thr-AMP and then transferred to the acceptor end of tRNA(Thr). Also edits incorrectly charged L-seryl-tRNA(Thr). This Acholeplasma laidlawii (strain PG-8A) protein is Threonine--tRNA ligase.